Reading from the N-terminus, the 359-residue chain is 4-galactosyl-N-acetylglucosaminide 3-alpha-L-fucosyltransferase 9 (359 aa).

The Cytoplasmic portion of the chain corresponds to 1–11; sequence MTSASKGILRP. Residues 12–32 traverse the membrane as a helical; Signal-anchor for type II membrane protein segment; the sequence is FLIVCIILACSMVCLFIYIKP. Residues 33–359 are Lumenal-facing; the sequence is TNSWIFSPME…VGNLEKWFWN (327 aa). Residue N62 is glycosylated (N-linked (GlcNAc...) asparagine). Residues 63–168 are acceptor-binding; that stretch reads ETTILIWVWP…RRDSDIQVPY (106 aa). Q75 serves as a coordination point for a beta-D-galactosyl-(1-&gt;4)-N-acetyl-beta-D-glucosaminyl derivative. Disulfide bonds link C82–C335, C91–C338, and C190–C238. The N-linked (GlcNAc...) asparagine glycan is linked to N101. Position 137 (E137) interacts with a beta-D-galactosyl-(1-&gt;4)-N-acetyl-beta-D-glucosaminyl derivative. E137 (nucleophile) is an active-site residue. E137 is a binding site for GDP-beta-L-fucose. The N-linked (GlcNAc...) asparagine glycan is linked to N153. GDP-beta-L-fucose-binding residues include Y168, V192, S194, N195, R202, V226, Y241, N246, Y252, E255, and K256. Residues 169–326 are donor-binding; sequence GFLTVSTNPF…NWRKDFTVNL (158 aa). The acceptor-binding stretch occupies residues 327 to 359; it reads PRFWESHACLACDHVKRHQEYKSVGNLEKWFWN.

This sequence belongs to the glycosyltransferase 10 family. In terms of assembly, homodimer. Post-translationally, N-glycosylated with complex-type N-glycans.

It is found in the golgi apparatus. Its subcellular location is the trans-Golgi network membrane. It localises to the golgi apparatus membrane. The enzyme catalyses a beta-D-galactosyl-(1-&gt;4)-N-acetyl-beta-D-glucosaminyl derivative + GDP-beta-L-fucose = a beta-D-galactosyl-(1-&gt;4)-[alpha-L-fucosyl-(1-&gt;3)]-N-acetyl-beta-D-glucosaminyl derivative + GDP + H(+). The catalysed reaction is an alpha-Neu5Ac-(2-&gt;3)-beta-D-Gal-(1-&gt;4)-beta-D-GlcNAc-(1-&gt;3)-beta-D-Gal-(1-&gt;4)-beta-D-GlcNAc derivative + GDP-beta-L-fucose = an alpha-Neu5Ac-(2-&gt;3)-beta-D-Gal-(1-&gt;4)-beta-D-GlcNAc-(1-&gt;3)-beta-D-Gal-(1-&gt;4)-[alpha-L-Fuc-(1-&gt;3)]-beta-D-GlcNAc derivative + GDP + H(+). It catalyses the reaction alpha-N-glycoloylneuraminosyl-(2-&gt;3)-beta-D-galactosyl-(1-&gt;4)-N-acetyl-beta-D-glucosaminyl-(1-&gt;3)-beta-D-galactosyl-(1-&gt;4)-N-acetyl-beta-D-glucosaminyl-(1-&gt;3)-beta-D-galactosyl-(1-&gt;4)-beta-D-glucosyl-(1&lt;-&gt;1')-ceramide + GDP-beta-L-fucose = alpha-N-glycoloylneuraminosyl-(2-&gt;3)-beta-D-galactosyl-(1-&gt;4)-N-acetyl-beta-D-glucosaminyl-(1-&gt;3)-beta-D-galactosyl-(1-&gt;4)-[alpha-L-fucosyl-(1-&gt;3)]-N-acetyl-beta-D-glucosaminyl-(1-&gt;3)-beta-D-galactosyl-(1-&gt;4)-beta-D-glucosyl-(1&lt;-&gt;1')-ceramide + GDP + H(+). It carries out the reaction alpha-D-galactosyl-(1-&gt;3)-beta-D-galactosyl-(1-&gt;4)-N-acetyl-beta-D-glucosaminyl-(1-&gt;3)-beta-D-galactosyl-(1-&gt;4)-beta-D-glucosyl-(1&lt;-&gt;1')-ceramide + GDP-beta-L-fucose = a neolactoside IV(3)-alpha-Gal,III(3)-alpha-Fuc-nLc4Cer + GDP + H(+). The enzyme catalyses a neolactoside nLc4Cer + GDP-beta-L-fucose = a neolactoside III(3)-alpha-Fuc-nLc4Cer + GDP + H(+). The catalysed reaction is an N-acetyl-alpha-neuraminyl-(2-&gt;3)-beta-D-galactosyl-(1-&gt;4)-N-acetyl-beta-D-glucosaminyl derivative + GDP-beta-L-fucose = an alpha-Neu5Ac-(2-&gt;3)-beta-D-Gal-(1-&gt;4)-[alpha-L-Fuc-(1-&gt;3)]-beta-D-GlcNAc derivative + GDP + H(+). It catalyses the reaction beta-D-Gal-(1-&gt;4)-beta-D-GlcNAc-(1-&gt;3)-beta-D-Gal-(1-&gt;4)-D-Glc + GDP-beta-L-fucose = beta-D-Gal-(1-&gt;4)-[alpha-L-Fuc-(1-&gt;3)]-beta-D-GlcNAc-(1-&gt;3)-beta-D-Gal-(1-&gt;4)-D-Glc + GDP + H(+). It carries out the reaction an alpha-L-Fuc-(1-&gt;2)-beta-D-Gal-(1-&gt;4)-beta-D-GlcNAc derivative + GDP-beta-L-fucose = an alpha-L-Fuc-(1-&gt;2)-beta-D-Gal-(1-&gt;4)-[alpha-L-Fuc-(1-&gt;3)]-beta-D-GlcNAc derivative + GDP + H(+). The protein operates within protein modification; protein glycosylation. It functions in the pathway glycolipid biosynthesis. With respect to regulation, activated by Mn2+. Functionally, catalyzes alpha(1-&gt;3) linkage of fucosyl moiety transferred from GDP-beta-L-fucose to N-acetyl glucosamine (GlcNAc) within type 2 lactosamine (LacNAc, beta-D-Gal-(1-&gt;4)-beta-D-GlcNAc-) glycan attached to glycolipids and N- or O-linked glycoproteins. Fucosylates distal type 2 LacNAc and its fucosylated (H-type 2 LacNAc) and sialylated (sialyl-type 2 LacNAc) derivatives to form Lewis x (Lex) (CD15) and Lewis y (Ley) antigenic epitopes involved in cell adhesion and differentiation. Generates Lex epitopes in the brain, presumably playing a role in the maintenance of neuronal stemness and neurite outgrowth in progenitor neural cells. Fucosylates the internal type 2 LacNAc unit of the polylactosamine chain to form VIM-2 antigen that serves as recognition epitope for SELE. Can also modify milk oligosaccharides in particular type 2 tetrasaccharide LNnT. This is 4-galactosyl-N-acetylglucosaminide 3-alpha-L-fucosyltransferase 9 from Bos taurus (Bovine).